The primary structure comprises 1710 residues: Protein NETWORKED 1B (1710 aa).

One can recognise an NAB domain in the interval 13 to 92; the sequence is YSWWWDSHIP…ERYDHTTVEL (80 aa). The segment at 113–159 is disordered; sequence EDSASSSSEPRTEADTEALQKDGTKSKRSFSQMNKLDGTSDSHEADS. Basic and acidic residues-rich tracts occupy residues 122-137 and 150-159; these read PRTE…DGTK and GTSDSHEADS. 6 coiled-coil regions span residues 152-446, 474-546, 579-883, 974-1021, 1095-1259, and 1285-1336; these read SDSH…ELGA, QMLR…EIHC, VKKL…IDSL, HQCG…FESL, VSSL…LQEK, and LILE…LSAY. The tract at residues 1409–1448 is disordered; the sequence is RLSRQITRSTSQKRRDRRKIENIQPDDQVTGESRQPRLRP. The stretch at 1559-1665 forms a coiled coil; sequence RRLSSLRISL…VLKLEDGTKS (107 aa).

It belongs to the NET family. Expressed in root meristems and at very low levels throughout mature vasculature.

Plant-specific actin binding protein. May be part of a membrane-cytoskeletal adapter complex. The chain is Protein NETWORKED 1B from Arabidopsis thaliana (Mouse-ear cress).